Consider the following 1496-residue polypeptide: Chromosome partition protein MukB (1496 aa).

Residue 63–70 (GGNGAGKS) participates in ATP binding. Coiled coils occupy residues 328 to 493 (KLEL…QRLS), 536 to 632 (KMQA…APAW), 808 to 832 (RAAREKHLETLKAERDEVSEQHAER), 861 to 1171 (NPEE…SAEE), and 1235 to 1291 (IDAI…LQNI). Positions 694 to 811 (PDGSDDVRLN…EVPLFGRAAR (118 aa)) are flexible hinge. Positions 1082-1091 (RARSRRDELQ) are enriched in basic and acidic residues. Residues 1082-1101 (RARSRRDELQQRLSQQRSRK) are disordered.

The protein belongs to the SMC family. MukB subfamily. In terms of assembly, homodimerization via its hinge domain. Binds to DNA via its C-terminal region. Interacts, and probably forms a ternary complex, with MukE and MukF via its C-terminal region. The complex formation is stimulated by calcium or magnesium. Interacts with tubulin-related protein FtsZ.

Its subcellular location is the cytoplasm. The protein localises to the nucleoid. Its function is as follows. Plays a central role in chromosome condensation, segregation and cell cycle progression. Functions as a homodimer, which is essential for chromosome partition. Involved in negative DNA supercoiling in vivo, and by this means organize and compact chromosomes. May achieve or facilitate chromosome segregation by condensation DNA from both sides of a centrally located replisome during cell division. The sequence is that of Chromosome partition protein MukB from Actinobacillus pleuropneumoniae serotype 5b (strain L20).